The primary structure comprises 88 residues: Apolipoprotein C-I (88 aa).

Residues 1–26 (MRLFIALPVLIVVVAMALEGPAPAQA) form the signal peptide.

The protein belongs to the apolipoprotein C1 family.

It localises to the secreted. Functionally, inhibitor of lipoprotein binding to the low density lipoprotein (LDL) receptor, LDL receptor-related protein, and very low density lipoprotein (VLDL) receptor. Associates with high density lipoproteins (HDL) and the triacylglycerol-rich lipoproteins in the plasma and makes up about 10% of the protein of the VLDL and 2% of that of HDL. Appears to interfere directly with fatty acid uptake and is also the major plasma inhibitor of cholesteryl ester transfer protein (CETP). Modulates the interaction of APOE with beta-migrating VLDL and inhibits binding of beta-VLDL to the LDL receptor-related protein. Binds free fatty acids and reduces their intracellular esterification. The protein is Apolipoprotein C-I (Apoc1) of Grammomys surdaster (African woodland thicket rat).